Reading from the N-terminus, the 227-residue chain is Cytochrome c oxidase subunit 2 (227 aa).

The Mitochondrial intermembrane portion of the chain corresponds to 1–14 (MAYPMQLGLQDATS). A helical membrane pass occupies residues 15–45 (PIMEELLHFHDHTLMIVFLISSLVLYIISLM). Over 46 to 59 (LTTKLTHTSTMDAQ) the chain is Mitochondrial matrix. Residues 60 to 87 (EVETIWTILPAIILIMIALPSLRILYMM) traverse the membrane as a helical segment. Residues 88 to 227 (DEINNPSLTV…HFEKWSASML (140 aa)) are Mitochondrial intermembrane-facing. Cu cation is bound by residues His161, Cys196, Glu198, Cys200, His204, and Met207. Glu198 is a Mg(2+) binding site.

It belongs to the cytochrome c oxidase subunit 2 family. As to quaternary structure, component of the cytochrome c oxidase (complex IV, CIV), a multisubunit enzyme composed of 14 subunits. The complex is composed of a catalytic core of 3 subunits MT-CO1, MT-CO2 and MT-CO3, encoded in the mitochondrial DNA, and 11 supernumerary subunits COX4I, COX5A, COX5B, COX6A, COX6B, COX6C, COX7A, COX7B, COX7C, COX8 and NDUFA4, which are encoded in the nuclear genome. The complex exists as a monomer or a dimer and forms supercomplexes (SCs) in the inner mitochondrial membrane with NADH-ubiquinone oxidoreductase (complex I, CI) and ubiquinol-cytochrome c oxidoreductase (cytochrome b-c1 complex, complex III, CIII), resulting in different assemblies (supercomplex SCI(1)III(2)IV(1) and megacomplex MCI(2)III(2)IV(2)). Found in a complex with TMEM177, COA6, COX18, COX20, SCO1 and SCO2. Interacts with TMEM177 in a COX20-dependent manner. Interacts with COX20. Interacts with COX16. Requires Cu cation as cofactor.

The protein localises to the mitochondrion inner membrane. The catalysed reaction is 4 Fe(II)-[cytochrome c] + O2 + 8 H(+)(in) = 4 Fe(III)-[cytochrome c] + 2 H2O + 4 H(+)(out). Its function is as follows. Component of the cytochrome c oxidase, the last enzyme in the mitochondrial electron transport chain which drives oxidative phosphorylation. The respiratory chain contains 3 multisubunit complexes succinate dehydrogenase (complex II, CII), ubiquinol-cytochrome c oxidoreductase (cytochrome b-c1 complex, complex III, CIII) and cytochrome c oxidase (complex IV, CIV), that cooperate to transfer electrons derived from NADH and succinate to molecular oxygen, creating an electrochemical gradient over the inner membrane that drives transmembrane transport and the ATP synthase. Cytochrome c oxidase is the component of the respiratory chain that catalyzes the reduction of oxygen to water. Electrons originating from reduced cytochrome c in the intermembrane space (IMS) are transferred via the dinuclear copper A center (CU(A)) of subunit 2 and heme A of subunit 1 to the active site in subunit 1, a binuclear center (BNC) formed by heme A3 and copper B (CU(B)). The BNC reduces molecular oxygen to 2 water molecules using 4 electrons from cytochrome c in the IMS and 4 protons from the mitochondrial matrix. This is Cytochrome c oxidase subunit 2 (MT-CO2) from Damaliscus pygargus phillipsi (Blesbok).